Here is a 737-residue protein sequence, read N- to C-terminus: Probable beta-glucosidase L (737 aa).

A signal peptide spans 1–19 (MRSLIRSGALNAFLAASLA). A glycan (N-linked (GlcNAc...) asparagine) is linked at Asn225. Residue Asp253 is part of the active site. 3 N-linked (GlcNAc...) asparagine glycosylation sites follow: Asn340, Asn365, and Asn608.

It belongs to the glycosyl hydrolase 3 family.

The protein localises to the secreted. It carries out the reaction Hydrolysis of terminal, non-reducing beta-D-glucosyl residues with release of beta-D-glucose.. It functions in the pathway glycan metabolism; cellulose degradation. In terms of biological role, beta-glucosidases are one of a number of cellulolytic enzymes involved in the degradation of cellulosic biomass. Catalyzes the last step releasing glucose from the inhibitory cellobiose. The protein is Probable beta-glucosidase L (bglL) of Emericella nidulans (strain FGSC A4 / ATCC 38163 / CBS 112.46 / NRRL 194 / M139) (Aspergillus nidulans).